The sequence spans 567 residues: Sensor histidine kinase MtrB (567 aa).

Residues 1–15 are compositionally biased toward basic residues; it reads MIFGSRRRIRGRRGR. Positions 1 to 20 are disordered; it reads MIFGSRRRIRGRRGRSGPMT. 2 helical membrane passes run 42 to 62 and 213 to 233; these read VVALTLGLSLAVILALGFVLT and GTMATGGLVLLVLLAGIALLV. The HAMP domain occupies 235–287; that stretch reads RQVVVPVRSASRIAERFAEGHLSERMPVRGEDDMARLAVSFNDMAESLSRQIA. Residues 302–519 form the Histidine kinase domain; that stretch reads DVSHELRTPL…CFRLTLPMVR (218 aa). H305 carries the post-translational modification Phosphohistidine; by autocatalysis. Pro residues predominate over residues 529-551; that stretch reads PMKPIPQPVLQPVAQPNPQPMPP. Residues 529–567 are disordered; that stretch reads PMKPIPQPVLQPVAQPNPQPMPPEYKERQRPREHAEWSG. A compositionally biased stretch (basic and acidic residues) spans 552 to 567; that stretch reads EYKERQRPREHAEWSG.

As to quaternary structure, interacts with MrtA. Interacts with LpqB, probably extracytoplasmically via MtrB's sensor domain. Requires Mg(2+) as cofactor. Ca(2+) is required as a cofactor. In terms of processing, the C-terminal domain (residues 234-567) autophosphorylates.

It localises to the cell membrane. It carries out the reaction ATP + protein L-histidine = ADP + protein N-phospho-L-histidine.. Ca(2+) ions inhibit the phosphotransfer from MtrB to MtrA. Its function is as follows. Member of the two-component regulatory system MtrA/MtrB. Probably functions as a membrane-associated protein kinase that phosphorylates MtrA in response to environmental signals. Autophosphorylates and transfers phosphate to MtrA in vitro. Overexpression of MtrA alone decreases bacterial virulence in mouse infection; co-expression of MtrA and MtrB restores normal bacterial growth, suggesting that bacterial growth in macrophages requires an optimal ratio of MtrB to MtrA. Probably plays a role in cell division. The sequence is that of Sensor histidine kinase MtrB (mtrB) from Mycobacterium tuberculosis (strain ATCC 25618 / H37Rv).